The primary structure comprises 264 residues: MVKSHIGSWILVLFVAMWSDVGLCKKRPKPGGGWNTGGSRYPGQGSPGGNRYPSQGGGGWGQPHGGGWGQPHGGGWGQPHGGGWGQPHGGGWGQPHGGGGWGQGGTHGQWNKPSKPKTNMKHVAGAAAAGAVVGGLGGYMLGSAMSRPLIHFGNDYEDRYYRENMYRYPNQVYYRPVDQYSNQNNFVHDCVNITVKQHTVTTTTKGENFTETDIKMMERVVEQMCITQYQRESEAYYQRGASVILFSSPPVILLISFLIFLIVG.

The first 24 residues, 1–24 (MVKSHIGSWILVLFVAMWSDVGLC), serve as a signal peptide directing secretion. The interaction with GRB2, ERI3 and SYN1 stretch occupies residues 25–241 (KKRPKPGGGW…ESEAYYQRGA (217 aa)). A disordered region spans residues 28–118 (PKPGGGWNTG…QWNKPSKPKT (91 aa)). 6 repeat units span residues 54–62 (SQGGGGWGQ), 63–70 (PHGGGWGQ), 71–78 (PHGGGWGQ), 79–86 (PHGGGWGQ), 87–94 (PHGGGWGQ), and 95–103 (PHGGGGWGQ). The segment at 54 to 103 (SQGGGGWGQPHGGGWGQPHGGGWGQPHGGGWGQPHGGGWGQPHGGGGWGQ) is 6 X 8 AA tandem repeats of P-H-G-G-G-W-G-Q. Gly residues predominate over residues 55 to 107 (QGGGGWGQPHGGGWGQPHGGGWGQPHGGGWGQPHGGGWGQPHGGGGWGQGGTH). The Cu(2+) site is built by H72, G73, G74, H80, G81, G82, H88, G89, G90, H96, G98, and G99. Cysteines 190 and 225 form a disulfide. N192 and N208 each carry an N-linked (GlcNAc...) asparagine glycan. A241 carries GPI-anchor amidated alanine lipidation. Residues 242 to 264 (SVILFSSPPVILLISFLIFLIVG) constitute a propeptide, removed in mature form.

Belongs to the prion family. As to quaternary structure, monomer and homodimer. Has a tendency to aggregate into amyloid fibrils containing a cross-beta spine, formed by a steric zipper of superposed beta-strands. Soluble oligomers may represent an intermediate stage on the path to fibril formation. Copper binding may promote oligomerization. Interacts with GRB2, APP, ERI3/PRNPIP and SYN1. Mislocalized cytosolically exposed PrP interacts with MGRN1; this interaction alters MGRN1 subcellular location and causes lysosomal enlargement. Interacts with KIAA1191.

The protein localises to the cell membrane. It localises to the golgi apparatus. Functionally, its primary physiological function is unclear. Has cytoprotective activity against internal or environmental stresses. May play a role in neuronal development and synaptic plasticity. May be required for neuronal myelin sheath maintenance. May play a role in iron uptake and iron homeostasis. Soluble oligomers are toxic to cultured neuroblastoma cells and induce apoptosis (in vitro). Association with GPC1 (via its heparan sulfate chains) targets PRNP to lipid rafts. Also provides Cu(2+) or Zn(2+) for the ascorbate-mediated GPC1 deaminase degradation of its heparan sulfate side chains. This chain is Major prion protein (PRNP), found in Tragelaphus imberbis (Lesser kudu).